The chain runs to 425 residues: Putative type I restriction enzyme MjaX specificity subunit (425 aa).

This sequence belongs to the type-I restriction system S methylase family.

A putative specificity (S) subunit of a type I restriction enzyme thought to recognize 5'-TAGN(6)TGC-3'; the other subunits are unknown. This is Putative type I restriction enzyme MjaX specificity subunit from Methanocaldococcus jannaschii (strain ATCC 43067 / DSM 2661 / JAL-1 / JCM 10045 / NBRC 100440) (Methanococcus jannaschii).